A 244-amino-acid polypeptide reads, in one-letter code: MSLLPHRQTQLKALLRRLGLTDNTPVDWNLVDLALTHASQSPEQNYQQLEFVGDAVVRLASAEVLMKHYPQTSVGEMSALRAILVSDRTLAGWGELYGLDRFLWITPAVLADKNGRVSLMADSFEALLGALYLSVGDLSLIRPWLSEHLLAKATEIRQDPALHNYKEALQAWTQAHYKCLPEYRVEPLDQNLPQQSGFQATVWLGDQPLGSGSGSSKKSAEQAAAQQAYQDFIAKEILPMPKIN.

Positions 11-136 constitute an RNase III domain; that stretch reads LKALLRRLGL…LLGALYLSVG (126 aa). E50 is a Mg(2+) binding site. D54 is a catalytic residue. The Mg(2+) site is built by D122 and E125. The active site involves E125. A DRBM domain is found at 164-234; that stretch reads NYKEALQAWT…AQQAYQDFIA (71 aa).

Belongs to the ribonuclease III family. Homodimer. It depends on Mg(2+) as a cofactor.

Its subcellular location is the cytoplasm. It catalyses the reaction Endonucleolytic cleavage to 5'-phosphomonoester.. Digests double-stranded RNA. Involved in the processing of primary rRNA transcript to yield the immediate precursors to the large and small rRNAs (23S and 16S). Processes some mRNAs, and tRNAs when they are encoded in the rRNA operon. Processes pre-crRNA and tracrRNA of type II CRISPR loci if present in the organism. The sequence is that of Ribonuclease 3 2 from Synechocystis sp. (strain ATCC 27184 / PCC 6803 / Kazusa).